Consider the following 56-residue polypeptide: Protein hunchback (56 aa).

C2H2-type zinc fingers lie at residues 1 to 5, 11 to 33, and 39 to 56; these read HLRNH, FKCDKCSYSCVNKSMLNSHLKSH, and FRCSDCAYATKYCHSLKL.

It belongs to the hunchback C2H2-type zinc-finger protein family.

It is found in the nucleus. Its function is as follows. Gap class segmentation protein that controls development of head structures. The sequence is that of Protein hunchback (hb) from Euscelis plebejus (Leafhopper).